A 122-amino-acid polypeptide reads, in one-letter code: Large ribosomal subunit protein uL14 (122 aa).

Belongs to the universal ribosomal protein uL14 family. Part of the 50S ribosomal subunit. Forms a cluster with proteins L3 and L19. In the 70S ribosome, L14 and L19 interact and together make contacts with the 16S rRNA in bridges B5 and B8.

Its function is as follows. Binds to 23S rRNA. Forms part of two intersubunit bridges in the 70S ribosome. This chain is Large ribosomal subunit protein uL14, found in Streptococcus pneumoniae (strain JJA).